Here is a 356-residue protein sequence, read N- to C-terminus: D-amino-acid oxidase (356 aa).

An N-terminal signal peptide occupies residues 1–17; it reads MAKIVVIGAGVAGLTTA. FAD is bound by residues alanine 9, serine 44, glycine 48, and asparagine 50. Phenylalanine 54 contacts anthranilate. Valine 171 is a binding site for FAD. N-linked (GlcNAc...) asparagine glycosylation occurs at asparagine 192. Residue tyrosine 243 coordinates anthranilate. Tyrosine 243 provides a ligand contact to (R)-lactate. Asparagine 262 carries N-linked (GlcNAc...) asparagine glycosylation. 5 residues coordinate FAD: arginine 302, alanine 329, glycine 332, tyrosine 333, and glutamine 334. Arginine 302 is a binding site for anthranilate. Residue arginine 302 coordinates (R)-lactate.

This sequence belongs to the DAMOX/DASOX family. The cofactor is FAD.

The protein resides in the peroxisome matrix. The catalysed reaction is a D-alpha-amino acid + O2 + H2O = a 2-oxocarboxylate + H2O2 + NH4(+). The enzyme catalyses D-alanine + O2 + H2O = pyruvate + H2O2 + NH4(+). It catalyses the reaction D-serine + O2 + H2O = 3-hydroxypyruvate + H2O2 + NH4(+). It carries out the reaction D-phenylalanine + O2 + H2O = 3-phenylpyruvate + H2O2 + NH4(+). The catalysed reaction is D-lysine + O2 + H2O = 6-amino-2-oxohexanoate + H2O2 + NH4(+). The enzyme catalyses D-tyrosine + O2 + H2O = 3-(4-hydroxyphenyl)pyruvate + H2O2 + NH4(+). It catalyses the reaction D-methionine + O2 + H2O = 4-methylsulfanyl-2-oxobutanoate + H2O2 + NH4(+). It carries out the reaction D-tryptophan + O2 + H2O = indole-3-pyruvate + H2O2 + NH4(+). The catalysed reaction is D-leucine + O2 + H2O = 4-methyl-2-oxopentanoate + H2O2 + NH4(+). The enzyme catalyses D-valine + O2 + H2O = 3-methyl-2-oxobutanoate + H2O2 + NH4(+). Inhibited by benzoate and hypochlorite. Catalyzes the oxidative deamination of D-amino acids with broad substrate specificity. Enables the organism to utilize D-amino acids as a source of nutrients. This chain is D-amino-acid oxidase, found in Trigonopsis variabilis (Yeast).